Consider the following 79-residue polypeptide: Defensin-like protein 272 (79 aa).

The N-terminal stretch at 1–24 (MSSKIKFVALLIVVISLLLNNAQS) is a signal peptide. 4 disulfides stabilise this stretch: Cys-34-Cys-77, Cys-43-Cys-63, Cys-49-Cys-75, and Cys-53-Cys-76.

The protein belongs to the DEFL family.

It is found in the secreted. The sequence is that of Defensin-like protein 272 from Arabidopsis thaliana (Mouse-ear cress).